The following is a 311-amino-acid chain: Pyrimidine-specific ribonucleoside hydrolase RihA (311 aa).

Residue His-240 is part of the active site.

It belongs to the IUNH family. RihA subfamily.

Functionally, hydrolyzes cytidine or uridine to ribose and cytosine or uracil, respectively. The chain is Pyrimidine-specific ribonucleoside hydrolase RihA from Shigella boydii serotype 4 (strain Sb227).